We begin with the raw amino-acid sequence, 194 residues long: dTTP/UTP pyrophosphatase (194 aa).

Asp-73 acts as the Proton acceptor in catalysis.

This sequence belongs to the Maf family. YhdE subfamily. A divalent metal cation serves as cofactor.

Its subcellular location is the cytoplasm. The catalysed reaction is dTTP + H2O = dTMP + diphosphate + H(+). It catalyses the reaction UTP + H2O = UMP + diphosphate + H(+). Nucleoside triphosphate pyrophosphatase that hydrolyzes dTTP and UTP. May have a dual role in cell division arrest and in preventing the incorporation of modified nucleotides into cellular nucleic acids. This chain is dTTP/UTP pyrophosphatase, found in Clostridium botulinum (strain 657 / Type Ba4).